Reading from the N-terminus, the 254-residue chain is MNNTPRYPQRVRNDLRFRELTVLRVERISAGFQRIVLGGEALDGFTSRGFDDHSKLFFPQPDAHFVPPTVTEEGIVWPEGPRPPSRDYTPLYDELRHELAIDFFIHDGGVASGWAMQAQPGDKLTVAGPRGSLVVPEDYAYQLYVCDESGMPALRRRLETLSKLAVKPQVSALVSVRDNACQDYLAHLDGFNIEWLAHDEQAVDARLAQMQIPADDYFIWITGEGKVVKNLSRRFEAEQYDPQRVRAAAYWHAK.

The region spanning 15–136 is the FAD-binding FR-type domain; that stretch reads LRFRELTVLR…AGPRGSLVVP (122 aa).

The protein belongs to the SIP oxidoreductase family.

The protein resides in the cytoplasm. It catalyses the reaction 2 a Fe(II)-siderophore + NADP(+) + H(+) = 2 a Fe(III)-siderophore + NADPH. Functionally, plays a role in iron homeostasis under excess nickel conditions. The chain is NADPH-dependent ferric-chelate reductase (yqjH) from Escherichia coli (strain K12).